Here is a 299-residue protein sequence, read N- to C-terminus: Coenzyme PQQ synthesis protein B (299 aa).

Belongs to the PqqB family.

Its pathway is cofactor biosynthesis; pyrroloquinoline quinone biosynthesis. Its function is as follows. May be involved in the transport of PQQ or its precursor to the periplasm. This is Coenzyme PQQ synthesis protein B from Methylorubrum populi (strain ATCC BAA-705 / NCIMB 13946 / BJ001) (Methylobacterium populi).